We begin with the raw amino-acid sequence, 284 residues long: MDKIQNGWFSEISEFWPGNSFSLEVEKVLHHEKSEYQDFLVFKSKSFGNVLVLDGVIQATERDEFAYQEMITHIPLFSHPSPKRVLVVGGGDGGVLREVVKHPLVESVTLCEIDKGVIEASRNFLPNMRVGFDHPKVTLFIGDGMEFMRQRKGEFDVIITDSSDPIGPAQGLFERAYYELLKAALAPGGIVCSQCESMWLHLDTIKGLTTFCKELYPNVEYAYTSIPSYPGGSIGFILCSLGGSTKAPIREITPEVQSQMQYYNGEVHKASFVLPQFAAKKLNL.

The PABS domain maps to 6–241 (NGWFSEISEF…GSIGFILCSL (236 aa)). Glutamine 37 is an S-adenosyl 3-(methylsulfanyl)propylamine binding site. Residue tyrosine 67 participates in putrescine binding. S-adenosyl 3-(methylsulfanyl)propylamine-binding positions include glutamine 68, aspartate 92, glutamate 112, 143–144 (DG), and aspartate 161. Aspartate 161 acts as the Proton acceptor in catalysis. Residues 161 to 164 (DSSD) and tyrosine 229 each bind putrescine.

This sequence belongs to the spermidine/spermine synthase family.

The catalysed reaction is S-adenosyl 3-(methylsulfanyl)propylamine + putrescine = S-methyl-5'-thioadenosine + spermidine + H(+). Its pathway is amine and polyamine biosynthesis; spermidine biosynthesis; spermidine from putrescine: step 1/1. Catalyzes the production of spermidine from putrescine and decarboxylated S-adenosylmethionine (dcSAM). Has a strong preference for putrescine as substrate. The polypeptide is Spermidine synthase (spsA) (Dictyostelium discoideum (Social amoeba)).